A 411-amino-acid polypeptide reads, in one-letter code: DSEFAELKIRGKIFKLPILKASIGEDVIDISRVSAEADCFTYDPGFMSTASCQSTITYIDGDKGILRHRGYDIKDLAEKSDFLEVAYLLIYGELPSGEQYNNFTKQVAHHSLVNERLHYLFQTFCSSSHPMAIMLAAVGSLSAFYPDLLNFKEADYELTAIRMIAKIPTIAAMSYKYSIGQPFIYPDNSLDFTENFLHMMFATPCTKYKVNPIIKNALNKIFILHADHEQNASTSTVRIAGSSGANPFACISTGIASLWGPAHGGANEVVINMLKEIGSSEYIPKYIAKAKDKNDPFRLMGFGHRIYKNYDPRAAVLKETCKEVLKELGQLDNNPLLQIAIELEAIALKDEYFIERKLYPNVDFYSGIIYKAMGIPSQMFTVLFAIARTVGWMAQWKEMHEDPEQKISRPR.

Catalysis depends on residues His-304 and Asp-363.

It belongs to the citrate synthase family.

It catalyses the reaction oxaloacetate + acetyl-CoA + H2O = citrate + CoA + H(+). It functions in the pathway carbohydrate metabolism; tricarboxylic acid cycle; isocitrate from oxaloacetate: step 1/2. The chain is Citrate synthase (gltA) from Rickettsia massiliae.